A 340-amino-acid chain; its full sequence is Guanine nucleotide-binding protein subunit beta-4 (340 aa).

Position 2 is an N-acetylserine (S2). S2 carries the phosphoserine modification. WD repeat units follow at residues 53 to 92 (GHLA…KMHA), 95 to 134 (LRSS…GNVR), 141 to 179 (GHTG…QTTT), 182 to 221 (GHSG…CRQS), and 224 to 263 (GHIS…ELLL). The residue at position 266 (H266) is a Phosphohistidine. 2 WD repeats span residues 268-307 (NIIC…RAGV) and 310-339 (GHDN…LRIW).

Belongs to the WD repeat G protein beta family. As to quaternary structure, g proteins are composed of 3 units, alpha, beta and gamma. In terms of tissue distribution, widely expressed in the brain. Highest levels found in the hippocampus and layers v and vi of the neocortex.

Its function is as follows. Guanine nucleotide-binding proteins (G proteins) are involved as a modulator or transducer in various transmembrane signaling systems. The beta and gamma chains are required for the GTPase activity, for replacement of GDP by GTP, and for G protein-effector interaction. The chain is Guanine nucleotide-binding protein subunit beta-4 (Gnb4) from Rattus norvegicus (Rat).